Here is a 592-residue protein sequence, read N- to C-terminus: Isocitrate dehydrogenase kinase/phosphatase 1 (592 aa).

ATP-binding positions include 337–343 and lysine 358; that span reads APGTPGM. Residue aspartate 393 is part of the active site.

This sequence belongs to the AceK family.

It is found in the cytoplasm. It catalyses the reaction L-seryl-[isocitrate dehydrogenase] + ATP = O-phospho-L-seryl-[isocitrate dehydrogenase] + ADP + H(+). In terms of biological role, bifunctional enzyme which can phosphorylate or dephosphorylate isocitrate dehydrogenase (IDH) on a specific serine residue. This is a regulatory mechanism which enables bacteria to bypass the Krebs cycle via the glyoxylate shunt in response to the source of carbon. When bacteria are grown on glucose, IDH is fully active and unphosphorylated, but when grown on acetate or ethanol, the activity of IDH declines drastically concomitant with its phosphorylation. In Pseudoalteromonas translucida (strain TAC 125), this protein is Isocitrate dehydrogenase kinase/phosphatase 1.